Consider the following 296-residue polypeptide: Transmembrane O-methyltransferase (296 aa).

The helical transmembrane segment at 36 to 56 (VGTMSPAIALAFLPLVVTLLV) threads the bilayer. Residues Glu-142, 144-145 (GT), Ser-150, Glu-168, and Ser-198 each bind S-adenosyl-L-methionine.

It belongs to the class I-like SAM-binding methyltransferase superfamily. Cation-dependent O-methyltransferase family. As to quaternary structure, interacts with LHFPL5, PCDH15, TMC1, TMC2 and TMIE. Interacts directly with TMC1. The interaction of TOMT with TMC1 and TMC2 is required for the transportation of TMC1/2 into the stereocilia of hair cells.

Its subcellular location is the membrane. It is found in the cytoplasm. It localises to the endoplasmic reticulum. The enzyme catalyses a catechol + S-adenosyl-L-methionine = a guaiacol + S-adenosyl-L-homocysteine + H(+). Functionally, catalyzes the O-methylation, and thereby the inactivation, of catecholamine neurotransmitters and catechol hormones. Required for auditory function. Component of the cochlear hair cell's mechanotransduction (MET) machinery. Involved in the assembly of the asymmetric tip-link MET complex. Required for transportation of TMC1 and TMC2 proteins into the mechanically sensitive stereocilia of the hair cells. The function in MET is independent of the enzymatic activity. In Macaca mulatta (Rhesus macaque), this protein is Transmembrane O-methyltransferase.